We begin with the raw amino-acid sequence, 83 residues long: UPF0248 protein PH1212.1 (83 aa).

It belongs to the UPF0248 family.

This Pyrococcus horikoshii (strain ATCC 700860 / DSM 12428 / JCM 9974 / NBRC 100139 / OT-3) protein is UPF0248 protein PH1212.1.